We begin with the raw amino-acid sequence, 411 residues long: Tyrosine--tRNA ligase (411 aa).

Y34 serves as a coordination point for L-tyrosine. The short motif at 39–48 (CTATSLHIGS) is the 'HIGH' region element. Y171 and Q175 together coordinate L-tyrosine. The 'KMSKS' region motif lies at 231–235 (KMGKT). K234 lines the ATP pocket. An S4 RNA-binding domain is found at 345 to 411 (ISAYELFHEA…GKKRHILVRV (67 aa)).

It belongs to the class-I aminoacyl-tRNA synthetase family. TyrS type 1 subfamily. As to quaternary structure, homodimer.

Its subcellular location is the cytoplasm. It catalyses the reaction tRNA(Tyr) + L-tyrosine + ATP = L-tyrosyl-tRNA(Tyr) + AMP + diphosphate + H(+). Functionally, catalyzes the attachment of tyrosine to tRNA(Tyr) in a two-step reaction: tyrosine is first activated by ATP to form Tyr-AMP and then transferred to the acceptor end of tRNA(Tyr). The polypeptide is Tyrosine--tRNA ligase (Rickettsia africae (strain ESF-5)).